The following is a 156-amino-acid chain: Rhombotin-1 (156 aa).

2 LIM zinc-binding domains span residues 22–84 (KGCA…LFGT) and 86–148 (GNCA…GHLN).

As to expression, expressed in the brain and not in the thymus.

It localises to the nucleus. May be involved in gene regulation within neural lineage cells potentially by direct DNA binding or by binding to other transcription factors. This is Rhombotin-1 (Lmo1) from Mus musculus (Mouse).